The sequence spans 154 residues: MKLLSKIMIIALAASMLQACNGPGGMNKQGTGTLLGGAGGALLGSQFGKGKGQLVGVGVGALLGAVLGGQIGAGMDEQDRRLAELTSQRALETAPSGSNVEWRNPDNGNYGYITPNKTYRNSTGQYCREYTQTVVIGGKQQKAYGNACLQPDGQ.

The signal sequence occupies residues 1–19 (MKLLSKIMIIALAASMLQA). A lipid anchor (N-palmitoyl cysteine) is attached at cysteine 20. Cysteine 20 carries S-diacylglycerol cysteine lipidation.

Belongs to the rickettsiale 17 kDa surface antigen family.

The protein localises to the cell outer membrane. This chain is 17 kDa surface antigen (omp), found in Rickettsia rhipicephali.